A 424-amino-acid polypeptide reads, in one-letter code: UPF0597 protein SO_1403 (424 aa).

The protein belongs to the UPF0597 family.

The protein is UPF0597 protein SO_1403 of Shewanella oneidensis (strain ATCC 700550 / JCM 31522 / CIP 106686 / LMG 19005 / NCIMB 14063 / MR-1).